Consider the following 335-residue polypeptide: Fructose-1,6-bisphosphatase class 1 (335 aa).

Residues E92, D114, L116, and D117 each contribute to the Mg(2+) site. Residues 117-120 (DGSS), N209, and K275 contribute to the substrate site. E281 is a Mg(2+) binding site.

It belongs to the FBPase class 1 family. As to quaternary structure, homotetramer. Mg(2+) serves as cofactor.

The protein localises to the cytoplasm. The catalysed reaction is beta-D-fructose 1,6-bisphosphate + H2O = beta-D-fructose 6-phosphate + phosphate. The protein operates within carbohydrate biosynthesis; gluconeogenesis. In Paracidovorax citrulli (strain AAC00-1) (Acidovorax citrulli), this protein is Fructose-1,6-bisphosphatase class 1.